Reading from the N-terminus, the 267-residue chain is Zinc finger protein ZAT1 (267 aa).

The segment at 5–27 (HKCKLCWKSFANGRALGGHMRSH) adopts a C2H2-type 1 zinc-finger fold. 2 disordered regions span residues 34 to 99 (PSQP…ADIK) and 181 to 204 (SHKKKIAETDQLGSDELKKKKKKS). The segment covering 52 to 62 (QDRESETESSK) has biased composition (basic and acidic residues). Positions 63 to 73 (KPSRKRSRLNR) are enriched in basic residues. Basic and acidic residues predominate over residues 83 to 97 (QSNEEGKSETARAAD). C2H2-type zinc fingers lie at residues 160 to 182 (FECETCEKVFKSYQALGGHRASH) and 209 to 231 (HECPICAKVFTSGQALGGHKRSH).

It is found in the nucleus. Its function is as follows. Probable transcription factor that may be involved in stress responses. The polypeptide is Zinc finger protein ZAT1 (ZAT1) (Arabidopsis thaliana (Mouse-ear cress)).